Here is a 1253-residue protein sequence, read N- to C-terminus: Myosin-1 (1253 aa).

A disordered region spans residues 1 to 40 (MGHSRRPVGGEKKSRGFGRSKAAADVGDGRQAGKPQVKKA). A Myosin motor domain is found at 50 to 729 (IGVSDLTLLS…TLFALEAMRD (680 aa)). An ATP-binding site is contributed by 143-150 (GESGAGKT). Ser-371 carries the phosphoserine modification. The segment at 418 to 500 (SIGILDIYGF…PGVFAALNDA (83 aa)) is actin-binding. 2 IQ domains span residues 733–753 (HNMA…RIEC) and 754–779 (ATRI…QGHQ). One can recognise a TH1 domain in the interval 787–977 (RRRMSLLGSR…TIHTGAGEPA (191 aa)). 2 disordered regions span residues 959–1083 (TGDD…PKKP) and 1139–1253 (QVAP…DDDW). Residues 1029–1055 (PQPAAAQPAAPQPAARVVPQPVAAVAA) show a composition bias toward low complexity. 2 stretches are compositionally biased toward pro residues: residues 1068–1081 (APPP…PAPK) and 1143–1155 (APKP…PPAA). Residues 1080-1141 (PKKPTAKALY…PEAYLEEQVA (62 aa)) form the SH3 domain. 2 stretches are compositionally biased toward low complexity: residues 1156-1173 (PRST…AKAK) and 1221-1235 (NSAS…LAEA).

The protein belongs to the TRAFAC class myosin-kinesin ATPase superfamily. Myosin family. Phosphorylation of the TEDS site (Ser-371) is required for the polarization of the actin cytoskeleton. Phosphorylation probably activates the myosin-I ATPase activity.

The protein resides in the cytoplasm. It is found in the cytoskeleton. The protein localises to the actin patch. In terms of biological role, type-I myosin implicated in the organization of the actin cytoskeleton. Required for proper actin cytoskeleton polarization. At the cell cortex, assembles in patch-like structures together with proteins from the actin-polymerizing machinery and promotes actin assembly. Functions as actin nucleation-promoting factor (NPF) for the Arp2/3 complex. Plays an important role in polarized growth, spore germination, hyphal morphogenesis, and septal wall formation. This chain is Myosin-1 (myoA), found in Aspergillus clavatus (strain ATCC 1007 / CBS 513.65 / DSM 816 / NCTC 3887 / NRRL 1 / QM 1276 / 107).